Here is a 338-residue protein sequence, read N- to C-terminus: GTPase Obg (338 aa).

One can recognise an Obg domain in the interval 1–159 (MKFLDKAIIH…RILRLELILI (159 aa)). An OBG-type G domain is found at 160–333 (AHVGTLGLPN…IVKKIYDFLK (174 aa)). GTP is bound by residues 166-173 (GLPNSGKS), 191-195 (FTTLK), 213-216 (DIPG), 283-286 (NKID), and 314-316 (SAI). 2 residues coordinate Mg(2+): S173 and T193.

It belongs to the TRAFAC class OBG-HflX-like GTPase superfamily. OBG GTPase family. In terms of assembly, monomer. Requires Mg(2+) as cofactor.

The protein resides in the cytoplasm. In terms of biological role, an essential GTPase which binds GTP, GDP and possibly (p)ppGpp with moderate affinity, with high nucleotide exchange rates and a fairly low GTP hydrolysis rate. Plays a role in control of the cell cycle, stress response, ribosome biogenesis and in those bacteria that undergo differentiation, in morphogenesis control. This chain is GTPase Obg, found in Buchnera aphidicola subsp. Baizongia pistaciae (strain Bp).